The chain runs to 290 residues: MTKTSKASGLSWFFCDLDGTLLRYQNNQHLIEPTTKRAVAQLVESGANFVVATGRKPSDVRNIYKELGIEQASPYLIANNGAVVWDLKRNSYLNKQTLSLSDFDLIDHINQTLNQLNHEYGCILYGLNDQVYFYHIHAPDSQAFKQYFAFYEGEFVQNQYLEIDGLKTEYNLVKAIWFFKEVHQQKAVIAQHFTNQERLVITSAHSFELVPLNVSKGHAINLIKQQVKITDNQIMVLGDSYNDLPMFQHGVVKVTNHLAPDNLKQLATRVYELPASLFVGQALNDYFKFD.

Asp16 functions as the Nucleophile in the catalytic mechanism. A Mg(2+)-binding site is contributed by Asp16. Leu17 contacts phosphate. Mg(2+) is bound at residue Asp18. Phosphate contacts are provided by residues 53 to 54 and Lys216; that span reads TG. Mg(2+) is bound by residues Asp239 and Ser240. Asn242 lines the phosphate pocket.

It belongs to the HAD-like hydrolase superfamily. Cof family. Requires Mg(2+) as cofactor.

This is Putative phosphatase MPN_427 from Mycoplasma pneumoniae (strain ATCC 29342 / M129 / Subtype 1) (Mycoplasmoides pneumoniae).